The chain runs to 390 residues: MRKMLAAVSRVLSGASQKPASRVLVASRNFANDATFEIKKCDLHRLEEGPPVTTVLTREDGLKYYRMMQTVRRMELKADQLYKQKIIRGFCHLCDGQEACCVGLEAGINPTDHLITAYRAHGFTFTRGLSVREILAELTGRKGGCAKGKGGSMHMYAKNFYGGNGIVGAQVPLGAGIALACKYNGKDEVCLTLYGDGAANQGQIFEAYNMAALWKLPCIFICENNRYGMGTSVERAAASTDYYKRGDFIPGLRVDGMDILCVREATRFAAAYCRSGKGPILMELQTYRYHGHSMSDPGVSYRTREEIQEVRSKSDPIMLLKDRMVNSNLASVEELKEIDVEVRKEIEDAAQFATADPEPPLEELGYHIYSSDPPFEVRGANQWIKFKSVS.

The N-terminal 29 residues, 1–29 (MRKMLAAVSRVLSGASQKPASRVLVASRN), are a transit peptide targeting the mitochondrion. Position 63 is an N6-acetyllysine; alternate (lysine 63). Position 63 is an N6-succinyllysine; alternate (lysine 63). Pyruvate contacts are provided by histidine 92, tyrosine 118, arginine 119, alanine 157, glycine 165, valine 167, aspartate 196, glycine 197, alanine 198, asparagine 225, and tyrosine 227. 2 residues coordinate thiamine diphosphate: tyrosine 118 and arginine 119. Residues glycine 165, valine 167, aspartate 196, glycine 197, alanine 198, and asparagine 225 each coordinate thiamine diphosphate. Aspartate 196 is a Mg(2+) binding site. Asparagine 225 and tyrosine 227 together coordinate Mg(2+). Position 232 is a phosphoserine; by PDK1 (serine 232). Lysine 244 is modified (N6-acetyllysine; alternate). The residue at position 244 (lysine 244) is an N6-succinyllysine; alternate. Residue lysine 277 is modified to N6-succinyllysine. Thiamine diphosphate is bound at residue histidine 292. Serine 293 bears the Phosphoserine; by PDK1, PDK2, PDK3 and PDK4 mark. Residue serine 295 is modified to Phosphoserine. At serine 300 the chain carries Phosphoserine; by PDK1, PDK2, PDK3 and PDK4. Tyrosine 301 carries the post-translational modification Phosphotyrosine. Lysine 313 bears the N6-acetyllysine; alternate mark. Lysine 313 is modified (N6-succinyllysine; alternate). An N6-acetyllysine mark is found at lysine 321 and lysine 336. The residue at position 385 (lysine 385) is an N6-succinyllysine.

Heterotetramer of two PDHA1 and two PDHB subunits. The heterotetramer interacts with DLAT, and is part of the multimeric pyruvate dehydrogenase complex that contains multiple copies of pyruvate dehydrogenase (E1), dihydrolipoamide acetyltransferase (DLAT, E2) and lipoamide dehydrogenase (DLD, E3). These subunits are bound to an inner core composed of about 48 DLAT and 12 PDHX molecules. Thiamine diphosphate is required as a cofactor. Mg(2+) serves as cofactor. Post-translationally, phosphorylation at Ser-232, Ser-293 and Ser-300 by PDK family kinases inactivates the enzyme; for this phosphorylation at a single site is sufficient. Dephosphorylation at all three sites, i.e. at Ser-232, Ser-293 and Ser-300, is required for reactivation. In terms of processing, acetylation alters the phosphorylation pattern. Deacetylated by SIRT3. In terms of tissue distribution, ubiquitous.

The protein localises to the mitochondrion matrix. It catalyses the reaction N(6)-[(R)-lipoyl]-L-lysyl-[protein] + pyruvate + H(+) = N(6)-[(R)-S(8)-acetyldihydrolipoyl]-L-lysyl-[protein] + CO2. Its activity is regulated as follows. Pyruvate dehydrogenase activity is inhibited by phosphorylation of PDHA1; it is reactivated by dephosphorylation. In terms of biological role, the pyruvate dehydrogenase complex catalyzes the overall conversion of pyruvate to acetyl-CoA and CO(2), and thereby links the glycolytic pathway to the tricarboxylic cycle. In Homo sapiens (Human), this protein is Pyruvate dehydrogenase E1 component subunit alpha, somatic form, mitochondrial (PDHA1).